Reading from the N-terminus, the 202-residue chain is MDLLRHKKTAAGRGFLDDQFLIAMPGMKDDRFTRSVIYICAHSDEGAMGLIINQTQQMLFPDLLVQLGIMNEQEAIRLPAQARDFVVRNGGPVDRSRGFVLHSGDYRVESSLTVSDDICLTATVDILRAISSGRGPRHALMALGYSGWGAGQLETEIAENGWLTCPASPELLFDADIERKYDRILASIGIDLAHLSLAAGHA.

Belongs to the UPF0301 (AlgH) family.

The polypeptide is UPF0301 protein mlr7511 (Mesorhizobium japonicum (strain LMG 29417 / CECT 9101 / MAFF 303099) (Mesorhizobium loti (strain MAFF 303099))).